The primary structure comprises 418 residues: Nickel and cobalt resistance protein CnrC (418 aa).

The signal sequence occupies residues 1 to 29; sequence MKQVISSFLCRPRFVGSAIWLLPVALSHA.

Belongs to the outer membrane factor (OMF) (TC 1.B.17) family.

Functionally, the products of the genes cnrA, cnrB, and cnrC are likely to form a membrane-bound protein complex catalyzing an energy-dependent efflux of Ni(2+) and Co(2+). The mechanism of action of the CnrCBA complex may be that of a proton/cation antiporter. The sequence is that of Nickel and cobalt resistance protein CnrC (cnrC) from Cupriavidus metallidurans (strain ATCC 43123 / DSM 2839 / NBRC 102507 / CH34) (Ralstonia metallidurans).